Here is a 1002-residue protein sequence, read N- to C-terminus: Lon protease homolog, mitochondrial (1002 aa).

Residues V102–M313 enclose the Lon N-terminal domain. An ATP-binding site is contributed by G468–T475. The region spanning Q811 to S995 is the Lon proteolytic domain. Active-site residues include S901 and K944.

This sequence belongs to the peptidase S16 family. Homohexamer or homoheptamer. Organized in a ring with a central cavity.

Its subcellular location is the mitochondrion matrix. The enzyme catalyses Hydrolysis of proteins in presence of ATP.. In terms of biological role, ATP-dependent serine protease that mediates the selective degradation of misfolded, unassembled or oxidatively damaged polypeptides as well as certain short-lived regulatory proteins in the mitochondrial matrix. May also have a chaperone function in the assembly of inner membrane protein complexes. Participates in the regulation of mitochondrial gene expression and in the maintenance of the integrity of the mitochondrial genome. Binds to mitochondrial DNA in a site-specific manner. The sequence is that of Lon protease homolog, mitochondrial from Oryza sativa subsp. japonica (Rice).